A 70-amino-acid polypeptide reads, in one-letter code: MSQVCDICGKGPQTGNNVSHAHNKTKRRFMPNLQKVRTQLPSGEVKSIKACTRCIRSGAVVKPVAKKAVS.

The protein belongs to the bacterial ribosomal protein bL28 family.

In Maridesulfovibrio salexigens (strain ATCC 14822 / DSM 2638 / NCIMB 8403 / VKM B-1763) (Desulfovibrio salexigens), this protein is Large ribosomal subunit protein bL28.